The chain runs to 996 residues: Cilia- and flagella-associated protein 251 (996 aa).

11 WD repeats span residues 73-114 (GHCN…PKKT), 118-164 (PHPN…EPCL), 168-211 (EFDR…KGFN), 219-258 (PSLK…EKVD), 282-319 (KGSN…IAWF), 399-438 (SIVS…SVLS), 445-485 (TDKE…WQNS), 494-533 (QGKP…FDVN), 547-593 (IHHS…YSKQ), 615-658 (EQET…FKFC), and 719-759 (AHPD…LEQI). A disordered region spans residues 971-996 (DLEGEERDDNIEDQYEDEENEEYDQD).

It localises to the cell projection. The protein localises to the cilium. Its function is as follows. As component of a spoke-associated complex, regulates ciliary mobility by mediating a stable and functional assembly of the radial spoke 3 (RS3). This is Cilia- and flagella-associated protein 251 from Tetrahymena thermophila (strain SB210).